Consider the following 549-residue polypeptide: DNA polymerase lambda (549 aa).

The BRCT domain maps to 17-116; the sequence is DPDGMFRGVS…ERLPEHKFAI (100 aa). A disordered region spans residues 126 to 197; that stretch reads KEGGAAGSGV…ASGDSKETIA (72 aa). A compositionally biased stretch (basic and acidic residues) spans 149 to 175; sequence PENRKETAGGNRESRDAIAHPNEDSDV. A compositionally biased stretch (polar residues) spans 180 to 197; sequence STCTSSQSASGDSKETIA. The interval 233–247 is DNA-binding; it reads NIYRALGDDRRSFSY. His280 is a catalytic residue. The tract at residues 315-318 is DNA-binding; it reads GPAT. DCTP is bound by residues Arg356, 387-390, and 396-399; these read SYRR and GDMD. Residues 390 to 399 form an involved in primer binding region; the sequence is RGKSSCGDMD. Positions 397, 399, and 464 each coordinate Mn(2+). A DNA-binding region spans residues 438–479; sequence IEGTDCGVDTYFGLCTYPGRELRHRIDLKVYPRNRHAFGLLA. Asn487 is a dCTP binding site.

The protein belongs to the DNA polymerase type-X family. Interacts with PCNA. The cofactor is Mn(2+). As to expression, expressed in proliferating tissues. Expressed in roots, root apex, young leaves, shoot apical meristem (SAM), flag leaves and panicles.

The protein resides in the nucleus. It catalyses the reaction DNA(n) + a 2'-deoxyribonucleoside 5'-triphosphate = DNA(n+1) + diphosphate. Repair polymerase involved in base excision repair (BER) and responsible for repair of lesions that give rise to abasic (AP) sites in DNA. Has both DNA polymerase and terminal transferase activities. Has a 5'-deoxyribose-5-phosphate lyase (dRP lyase) activity. The protein is DNA polymerase lambda of Oryza sativa subsp. japonica (Rice).